We begin with the raw amino-acid sequence, 27 residues long: Small integral membrane protein 43 (27 aa).

Residues His15–Phe21 form an important for interaction with SLC2A1 and SLC2A3 region.

Interacts with glucose transporters SLC2A1/GLUT1 and SLC2A3/GLUT3; the interactions may promote SLC2A1- and SLC2A3-mediated glucose transport to meet the energy needs of mesendoderm differentiation.

The protein resides in the cell membrane. Its function is as follows. Required for mesendoderm differentiation. Interacts with glucose transporters and promotes glucose uptake. Probably augments the glucose uptake capacity of glucose transporter proteins to meet the energy needs of mesendoderm differentiation. This Pongo abelii (Sumatran orangutan) protein is Small integral membrane protein 43.